We begin with the raw amino-acid sequence, 295 residues long: Delta-1-pyrroline-5-carboxylate reductase apf3 (295 aa).

Belongs to the pyrroline-5-carboxylate reductase family.

The protein operates within secondary metabolite biosynthesis. Delta-1-pyrroline-5-carboxylate reductase; part of the gene cluster that mediates the biosynthesis of the cyclic tetrapeptide apicidin F (APF). The non-ribosomal peptide synthetase apf1 incorporates four different amino acids to produce apicidin F: L-phenylalanine, D-pipecolic acid (D-pip), N-methoxy-L-tryptophan and L-2-aminooctanedioic acid. L-Phenylalanine is the only proteinogenic amino acid directly used by apf1. The 3 other apf1 substrates are non-proteinogenic and have to be modified by other enzymes of the cluster. Lysine is converted to delta-1-pyrroline-5-carboxylate (P5C) which is reduced to L-pipecolic acid (L-pip) by apf3. L-pip is epimerized to D-pip, probably by apf1 activity, prior to incorporation. L-Tryptophan is N-oxidyzed by one of the cytochrome P450 monooxygenases (apf7 or apf8), and further methylated at the hydroxy group by the O-methyltransferase apf6 to yield N-methoxy-L-tryptophan. The synthesis of the fourth apf1 substrate is more complex. The fatty acid synthase apf5 is involved in the synthesis of the octanoic acid backbone of L-2-aminooctanedioic acid by fixing one acetyl-CoA unit and three malonyl-CoA units. Then one of the cytochrome P450 monooxygenases (apf7 or apf8) may oxidize this backbone to 2-oxooctanoic acid. The aminotransferase apf4 is predicted to catalyze the exchange of the keto group with an amino group. The next step would be the oxidation of 2-aminooctanoic acid by one of the cytochrome P450 monooxygenases (apf7 or apf8). The last step is the oxidation of 2-amino-8-hydroxyoctanoic acid to 2-aminooctanedioic acid is catalyzed by the FAD-dependent monooxygenase apf9. In Gibberella fujikuroi (strain CBS 195.34 / IMI 58289 / NRRL A-6831) (Bakanae and foot rot disease fungus), this protein is Delta-1-pyrroline-5-carboxylate reductase apf3.